Here is a 440-residue protein sequence, read N- to C-terminus: Ribulose bisphosphate carboxylase large chain (440 aa).

K4 carries the post-translational modification N6,N6,N6-trimethyllysine. Substrate is bound by residues N113 and T163. K165 serves as the catalytic Proton acceptor. K167 serves as a coordination point for substrate. Mg(2+)-binding residues include K191, D193, and E194. Residue K191 is modified to N6-carboxylysine. H284 serves as the catalytic Proton acceptor. The substrate site is built by R285, H317, and S369.

It belongs to the RuBisCO large chain family. Type I subfamily. Heterohexadecamer of 8 large chains and 8 small chains; disulfide-linked. The disulfide link is formed within the large subunit homodimers. Mg(2+) is required as a cofactor. Post-translationally, the disulfide bond which can form in the large chain dimeric partners within the hexadecamer appears to be associated with oxidative stress and protein turnover.

It localises to the plastid. Its subcellular location is the chloroplast. The enzyme catalyses 2 (2R)-3-phosphoglycerate + 2 H(+) = D-ribulose 1,5-bisphosphate + CO2 + H2O. The catalysed reaction is D-ribulose 1,5-bisphosphate + O2 = 2-phosphoglycolate + (2R)-3-phosphoglycerate + 2 H(+). In terms of biological role, ruBisCO catalyzes two reactions: the carboxylation of D-ribulose 1,5-bisphosphate, the primary event in carbon dioxide fixation, as well as the oxidative fragmentation of the pentose substrate in the photorespiration process. Both reactions occur simultaneously and in competition at the same active site. The polypeptide is Ribulose bisphosphate carboxylase large chain (Onoclea sensibilis (Sensitive fern)).